Consider the following 977-residue polypeptide: MASSHSSSPVPQGSSSDVFFKKEVDPTKHIRPVQSLPDVCPKEPTGDSHTLCVAPSLVTDQHRWTVYHSKVNLPAALNDPTLAKRESDFFTKTWGLDFVDTEVIPSLYLPQISKENFIAYQQEISQREKIHERCKNICPPKDTFDRTLLHIHDKSRTDLEQVPKIFMKPDFALDDSLTFNSVLPWSHFNTAGGKGSRDAASSKLLQEKLSHYLDIVEVNIAHQISLRSEAFFHAMTSQHELQDYLKKTTQAVKMLRDKIAQIDKVMCEGSLQILRLALTRNNCVKVYNKLKLMATVHQTQPTVQVLLSTSEFVGALDLIATTQEVLQQELQGIHSFRHLGSQLCELEKLIDKMMIAEFSTYSHSDLNRPLEGECQVLEEERLVSLVFGLLKQRKLNFLEIYGEEMIITAKNIIKERVINKVSQIEEIDTDVVVKLADQMRMLNFPQWIDLLKDIFSKFTVFLQRVKATLNIIHSVVLSVLEKSQRTRELEEIPQQRSAGKDSSLDTDVAYLTHEGWFISDAFSEGEPASAAVDTTSQRNTSPHSEPCSSDSVSEPECTTDSSSSKEQTSACAPPGGIEIIVSEDMRLTDLELGKLASNIQELLCNASDVCHDRAVKFLMSRAKDGFLEKLNSTEFIALSRLMETFIVDTEQICGRKSTSLLGALQSQANKFVNRFHEERRTKLSLLLDNERWKQADVPAEFQDLVDSIADGKIALPEKKPVVTEERKPADVLVVEGHQYAVVGTVLLLIRIILEYCQCVDNIPSVTTDMLTRLTDLLKYFNSRSCQLVLGAGALQVVGLKTITTKNLALSSRCLQLIVHYIPVIRAHFEARLPPKQWSMLRHFDHITKDYHDHIAEISAKLVAIMDSLFDKLLSKYEVKAPVPSPCFRNICKQMTKMHEAIFDLLPEEQTQMLFLRINASYKLHLKKQLSHLNVINDGGPQNGLVTADVAFYTGNLQALKGLKDLDLNMAEIWEQKR.

Residue S8 is modified to Phosphoserine. Residues H239–Q261 adopt a coiled-coil conformation. The tract at residues A528 to P573 is disordered. Polar residues predominate over residues V532–A570.

Belongs to the VPS54 family. Component of the Golgi-associated retrograde protein (GARP) complex, also called VFT (VPS fifty-three) complex, composed of VPS51, VPS52, VPS53 and VPS54. EIPR1 interacts with GARP complex and mediates its recruitment to the trans-Golgi network. Interacts with VPS51 in an EIPR1-independent manner.

It localises to the golgi apparatus. The protein resides in the trans-Golgi network. The protein localises to the membrane. In terms of biological role, acts as a component of the GARP complex that is involved in retrograde transport from early and late endosomes to the trans-Golgi network (TGN). The GARP complex is required for the maintenance of the cycling of mannose 6-phosphate receptors between the TGN and endosomes, this cycling is necessary for proper lysosomal sorting of acid hydrolases such as CTSD. Within the GARP complex, required to tether the complex to the TGN. Not involved in endocytic recycling. This Mus musculus (Mouse) protein is Vacuolar protein sorting-associated protein 54 (Vps54).